The following is a 137-amino-acid chain: Large ribosomal subunit protein uL16 (137 aa).

Residues 1 to 17 show a composition bias toward basic residues; sequence MLSPKRVKFRKRQRGRL. The segment at 1–24 is disordered; that stretch reads MLSPKRVKFRKRQRGRLKGTDERG.

The protein belongs to the universal ribosomal protein uL16 family. Part of the 50S ribosomal subunit.

Binds 23S rRNA and is also seen to make contacts with the A and possibly P site tRNAs. In Leptospira borgpetersenii serovar Hardjo-bovis (strain JB197), this protein is Large ribosomal subunit protein uL16.